A 448-amino-acid chain; its full sequence is Tryptophan dimethylallyltransferase 1 (448 aa).

Residues 80–81 (IL) and glutamate 89 contribute to the L-tryptophan site. Arginine 100, lysine 186, and tyrosine 188 together coordinate substrate. Positions 190 and 251 each coordinate L-tryptophan. Substrate is bound by residues arginine 264, lysine 266, tyrosine 268, glutamine 350, tyrosine 352, tyrosine 416, and tyrosine 420.

The protein belongs to the tryptophan dimethylallyltransferase family. Homodimer.

It carries out the reaction L-tryptophan + dimethylallyl diphosphate = 4-(3-methylbut-2-enyl)-L-tryptophan + diphosphate. The protein operates within alkaloid biosynthesis; ergot alkaloid biosynthesis. Its function is as follows. Catalyzes the first step of ergot alkaloid biosynthesis. Ergot alkaloids, which are produced by endophyte fungi, can enhance plant host fitness, but also cause livestock toxicosis to host plants. The protein is Tryptophan dimethylallyltransferase 1 (dmaW1) of Epichloe coenophiala (Tall fescue endophyte fungus).